The chain runs to 209 residues: V-type ATP synthase subunit D (209 aa).

The protein belongs to the V-ATPase D subunit family.

Its function is as follows. Produces ATP from ADP in the presence of a proton gradient across the membrane. In Thermoanaerobacter pseudethanolicus (strain ATCC 33223 / 39E) (Clostridium thermohydrosulfuricum), this protein is V-type ATP synthase subunit D.